We begin with the raw amino-acid sequence, 523 residues long: NADH-ubiquinone oxidoreductase chain 4 (523 aa).

14 consecutive transmembrane segments (helical) span residues 22–42, 62–82, 120–140, 149–169, 170–190, 204–224, 246–266, 276–296, 303–323, 338–358, 366–386, 404–424, 444–464, and 488–508; these read FFIM…AIAL, LLTF…SALF, ISLF…LVSW, EYCI…SVLD, LLLF…IIGV, FFLY…LIYF, ILWL…PVHI, PTAG…YGFL, FPYA…IAIV, IIAY…FSQN, ILLM…VGVL, TMPI…SLPG, FVAF…LWLC, and FFMF…PEPF.

This sequence belongs to the complex I subunit 4 family.

It is found in the mitochondrion membrane. It carries out the reaction a ubiquinone + NADH + 5 H(+)(in) = a ubiquinol + NAD(+) + 4 H(+)(out). Its function is as follows. Core subunit of the mitochondrial membrane respiratory chain NADH dehydrogenase (Complex I) that is believed to belong to the minimal assembly required for catalysis. Complex I functions in the transfer of electrons from NADH to the respiratory chain. The immediate electron acceptor for the enzyme is believed to be ubiquinone. The protein is NADH-ubiquinone oxidoreductase chain 4 (ND4) of Prototheca wickerhamii.